Here is a 142-residue protein sequence, read N- to C-terminus: ATP synthase epsilon chain (142 aa).

This sequence belongs to the ATPase epsilon chain family. As to quaternary structure, F-type ATPases have 2 components, CF(1) - the catalytic core - and CF(0) - the membrane proton channel. CF(1) has five subunits: alpha(3), beta(3), gamma(1), delta(1), epsilon(1). CF(0) has three main subunits: a, b and c.

It localises to the cell inner membrane. In terms of biological role, produces ATP from ADP in the presence of a proton gradient across the membrane. The polypeptide is ATP synthase epsilon chain (Shewanella frigidimarina (strain NCIMB 400)).